A 233-amino-acid polypeptide reads, in one-letter code: ATP-dependent Clp protease proteolytic subunit 1 (233 aa).

The active-site Nucleophile is the serine 136. Histidine 161 is an active-site residue.

The protein belongs to the peptidase S14 family. As to quaternary structure, fourteen ClpP subunits assemble into 2 heptameric rings which stack back to back to give a disk-like structure with a central cavity, resembling the structure of eukaryotic proteasomes.

It is found in the cytoplasm. The enzyme catalyses Hydrolysis of proteins to small peptides in the presence of ATP and magnesium. alpha-casein is the usual test substrate. In the absence of ATP, only oligopeptides shorter than five residues are hydrolyzed (such as succinyl-Leu-Tyr-|-NHMec, and Leu-Tyr-Leu-|-Tyr-Trp, in which cleavage of the -Tyr-|-Leu- and -Tyr-|-Trp bonds also occurs).. Cleaves peptides in various proteins in a process that requires ATP hydrolysis. Has a chymotrypsin-like activity. Plays a major role in the degradation of misfolded proteins. This Bifidobacterium longum (strain NCC 2705) protein is ATP-dependent Clp protease proteolytic subunit 1.